Reading from the N-terminus, the 431-residue chain is D-tagatose-1,6-bisphosphate aldolase subunit KbaZ (431 aa).

Belongs to the GatZ/KbaZ family. KbaZ subfamily. As to quaternary structure, forms a complex with KbaY.

It functions in the pathway carbohydrate metabolism; D-tagatose 6-phosphate degradation; D-glyceraldehyde 3-phosphate and glycerone phosphate from D-tagatose 6-phosphate: step 2/2. Component of the tagatose-1,6-bisphosphate aldolase KbaYZ that is required for full activity and stability of the Y subunit. Could have a chaperone-like function for the proper and stable folding of KbaY. When expressed alone, KbaZ does not show any aldolase activity. The polypeptide is D-tagatose-1,6-bisphosphate aldolase subunit KbaZ (Citrobacter koseri (strain ATCC BAA-895 / CDC 4225-83 / SGSC4696)).